We begin with the raw amino-acid sequence, 393 residues long: Acyltransferase ato1 (393 aa).

It belongs to the lysine N-acyltransferase mbtK family.

It participates in siderophore biosynthesis; ferrichrome biosynthesis. Its function is as follows. L-ornithine N(5)-monooxygenase; part of the siderophore biosynthetic pathway. Omphalotus olearius produces ferrichrome A, but no other siderophore has been detected. Ferrichrome A consists of a hexapeptide ring made up of one glycine, two serine, and three N(5)-hydroxyornithine amino acid residues, the latter acylated by trans-(alpha-methyl)-glutaconic acid residues. The biosynthesis of ferrichrome A depends on the hydroxylation of ornithine to N(5)-hydroxyornithine, catalyzed by the monooxygenase omo1. The second step, the acylation of N(5)-hydroxy-L-ornithine is probably catalyzed by the N-acyltransferase ato1. Finally, assembly of ferrichrome A is catalyzed by the nonribosomal peptide synthase (NRPS) fso1. In Omphalotus olearius (Jack o'lantern), this protein is Acyltransferase ato1.